Consider the following 342-residue polypeptide: MLTNASQVLLRNSDLFKDHSVLVLNYEGDTLPKALLESASSVSALALDFHHHLIMQPYAAKNLQLYFGHQLPTQECFDSVIVYFPKAKALAPYLFNLAGKHLKPQGQLIVVGENKGGIKSLPKQLPDYFDKAFKADNARHCIVFTSELNREAPEIKLQDWYSEYQLQTPQGEITICNMVGVFSEKKLDEGTKLLLENLPKMQGNVLDFGCGAGVIAAALLTAQPKLTLDCVDINAMALTSCDLTMQANGLSANIFASDGMAQTSGHYDGIISNPPFHDGLASTTNIATDFVKAASANLMRGGLFHIVANRHLPYSDCIAENFGEVNVSAENNRYKIYSNIKR.

The protein belongs to the methyltransferase superfamily. RsmC family. As to quaternary structure, monomer.

Its subcellular location is the cytoplasm. It carries out the reaction guanosine(1207) in 16S rRNA + S-adenosyl-L-methionine = N(2)-methylguanosine(1207) in 16S rRNA + S-adenosyl-L-homocysteine + H(+). In terms of biological role, specifically methylates the guanine in position 1207 of 16S rRNA in the 30S particle. The protein is Ribosomal RNA small subunit methyltransferase C of Shewanella piezotolerans (strain WP3 / JCM 13877).